Reading from the N-terminus, the 134-residue chain is Agouti-related protein (134 aa).

The N-terminal stretch at 1 to 20 (MLTTMLLSCALLLAMPTMLG) is a signal peptide. A propeptide spanning residues 21 to 84 (AQIGLAPLEG…VLDPEGRKAR (64 aa)) is cleaved from the precursor. Disulfide bonds link Cys-89–Cys-104, Cys-96–Cys-110, Cys-103–Cys-121, Cys-107–Cys-131, and Cys-112–Cys-119. The region spanning 89–131 (CVRLHESCLGHQVPCCDPCATCYCRFFNAFCYCRKLGTATNPC) is the Agouti domain. An interaction with melanocortin receptors region spans residues 113-115 (RFF).

Interacts with melanocortin receptors MC3R, MC4R and MC5R.

It localises to the secreted. The protein resides in the golgi apparatus lumen. Functionally, plays a role in weight homeostasis. Involved in the control of feeding behavior through the central melanocortin system. Acts as alpha melanocyte-stimulating hormone antagonist by inhibiting cAMP production mediated by stimulation of melanocortin receptors within the hypothalamus and adrenal gland. Has very low activity with MC5R. Is an inverse agonist for MC3R and MC4R being able to suppress their constitutive activity. It promotes MC3R and MC4R endocytosis in an arrestin-dependent manner. The protein is Agouti-related protein (AGRP) of Sus scrofa (Pig).